The following is a 1228-amino-acid chain: Membrane-anchored lipid-binding protein LAM1 (1228 aa).

Topologically, residues 1–1062 (MHEHKAELRL…IFKCFSKVNK (1062 aa)) are cytoplasmic. Positions 308–421 (EKGLSGWLYM…WINTLTSHKR (114 aa)) constitute a PH domain. Positions 773-978 (EAWCYFQDNF…KTREYLKKFN (206 aa)) constitute a VASt domain. Residues 1063-1083 (TLYYCLLISAVTNLFFVGKSI) traverse the membrane as a helical segment. At 1084–1228 (HSYFSVKSAE…EYNRLSAIPV (145 aa)) the chain is on the lumenal side. The N-linked (GlcNAc...) asparagine glycan is linked to Asn-1205.

This sequence belongs to the SIP3 family.

Its subcellular location is the mitochondrion membrane. The protein resides in the endoplasmic reticulum membrane. Its function is as follows. Involved in mitochondrial fragmentation during programmed cell death in response to high levels of alpha-factor mating pheromone or the drug amiodarone. May be involved in sterol transfer between intracellular membranes. The polypeptide is Membrane-anchored lipid-binding protein LAM1 (Saccharomyces cerevisiae (strain ATCC 204508 / S288c) (Baker's yeast)).